A 939-amino-acid polypeptide reads, in one-letter code: AP-2 complex subunit alpha (939 aa).

The segment covering 623–633 (RVPENEIRESK) has biased composition (basic and acidic residues). Residues 623–660 (RVPENEIRESKSPAPTSGPGSVLQNNVHVNNSHSKLNN) form a disordered region. Over residues 635–660 (PAPTSGPGSVLQNNVHVNNSHSKLNN) the composition is skewed to polar residues.

This sequence belongs to the adapter complexes large subunit family. As to quaternary structure, adaptor protein complex 2 (AP-2) is a heterotetramer composed of two large adaptins (alpha-type and beta-type subunits), a medium adaptin (mu-type subunit AP50) and a small adaptin (sigma-type subunit AP17).

Its subcellular location is the cell membrane. It is found in the membrane. It localises to the coated pit. Adaptins are components of the adapter complexes which link clathrin to receptors in coated vesicles. Clathrin-associated protein complexes are believed to interact with the cytoplasmic tails of membrane proteins, leading to their selection and concentration. Alpha adaptin is a subunit of the plasma membrane adapter. The sequence is that of AP-2 complex subunit alpha from Drosophila pseudoobscura pseudoobscura (Fruit fly).